Consider the following 413-residue polypeptide: Arginine biosynthesis bifunctional protein ArgJ 1 (413 aa).

Residues Thr-154, Lys-180, Thr-191, Glu-277, Asn-408, and Thr-413 each contribute to the substrate site. Thr-191 (nucleophile) is an active-site residue.

Belongs to the ArgJ family. Heterotetramer of two alpha and two beta chains.

Its subcellular location is the cytoplasm. The enzyme catalyses N(2)-acetyl-L-ornithine + L-glutamate = N-acetyl-L-glutamate + L-ornithine. It carries out the reaction L-glutamate + acetyl-CoA = N-acetyl-L-glutamate + CoA + H(+). Its pathway is amino-acid biosynthesis; L-arginine biosynthesis; L-ornithine and N-acetyl-L-glutamate from L-glutamate and N(2)-acetyl-L-ornithine (cyclic): step 1/1. The protein operates within amino-acid biosynthesis; L-arginine biosynthesis; N(2)-acetyl-L-ornithine from L-glutamate: step 1/4. Its function is as follows. Catalyzes two activities which are involved in the cyclic version of arginine biosynthesis: the synthesis of N-acetylglutamate from glutamate and acetyl-CoA as the acetyl donor, and of ornithine by transacetylation between N(2)-acetylornithine and glutamate. This Nostoc sp. (strain PCC 7120 / SAG 25.82 / UTEX 2576) protein is Arginine biosynthesis bifunctional protein ArgJ 1.